The sequence spans 90 residues: Probable Fe(2+)-trafficking protein (90 aa).

The protein belongs to the Fe(2+)-trafficking protein family.

In terms of biological role, could be a mediator in iron transactions between iron acquisition and iron-requiring processes, such as synthesis and/or repair of Fe-S clusters in biosynthetic enzymes. In Vibrio parahaemolyticus serotype O3:K6 (strain RIMD 2210633), this protein is Probable Fe(2+)-trafficking protein.